A 496-amino-acid polypeptide reads, in one-letter code: 1-aminocyclopropane-1-carboxylate synthase 4 (496 aa).

An N6-(pyridoxal phosphate)lysine modification is found at K300.

It belongs to the class-I pyridoxal-phosphate-dependent aminotransferase family. Pyridoxal 5'-phosphate is required as a cofactor. In terms of tissue distribution, expressed in leaves. Expressed in shoots and leaf blades. Expressed at low levels in leaf sheaths.

It carries out the reaction S-adenosyl-L-methionine = 1-aminocyclopropane-1-carboxylate + S-methyl-5'-thioadenosine + H(+). It participates in alkene biosynthesis; ethylene biosynthesis via S-adenosyl-L-methionine; ethylene from S-adenosyl-L-methionine: step 1/2. In terms of biological role, catalyzes the formation of 1-aminocyclopropane-1-carboxylate, a direct precursor of ethylene in higher plants. This Oryza sativa subsp. japonica (Rice) protein is 1-aminocyclopropane-1-carboxylate synthase 4.